We begin with the raw amino-acid sequence, 534 residues long: Cytochrome P450 monooxygenase vrtK (534 aa).

Cys448 contributes to the heme binding site.

It belongs to the cytochrome P450 family. Heme is required as a cofactor.

It participates in secondary metabolite biosynthesis; terpenoid biosynthesis. In terms of biological role, cytochrome P450 monooxygenase; part of the gene cluster that mediates the biosynthesis of viridicatumtoxin, a tetracycline-like fungal meroterpenoid with a unique, fused spirobicyclic ring system. The first step of the pathway is the production of the malonamoyl-CoA starter unit for the polyketide synthase vrtA. The aldolase vrtJ may be involved in the synthesis of the malonamate substrate for malonamoyl-CoA synthetase vrtB. The polyketide synthase vrtA then may utilize the malonamoyl-CoA starter unit, followed by sequential condensation of eight malonyl-CoA units to form the polyketide backbone. The cyclization of the last ring could be mediated by the lactamase-like protein vrtG. The proposed post-PKS tailoring steps are a hydroxylation at C5 catalyzed the cytochrome P450 monooxygenase vrtE, a hydroxylation at C12a catalyzed by VrtH and/or VrtI, and an O-methylation by the O-methyltransferase vrtF. VrtC is then proposed to catalyze the transfer of a geranyl group synthesized by vrtD to the aromatic C ring of the tetracyclic polyketide intermediate of viridicatumtoxin to yield previridicatumtoxin. Finally, the cytochrome P450 monooxygenase vrtK catalyzes the spirocyclization of the geranyl moiety of previridicatumtoxin to afford viridicatumtoxin. This Penicillium aethiopicum protein is Cytochrome P450 monooxygenase vrtK.